Here is a 570-residue protein sequence, read N- to C-terminus: Nucleoprotein (570 aa).

Residues 54–241 (MRKEKRDDSD…IEPKKSAINI (188 aa)) form a binding site for the cap structure m7GTP region. Positions 390 and 392 each coordinate Mn(2+). Zn(2+)-binding residues include Glu400, Cys507, His510, and Cys530. Asp534 serves as a coordination point for Mn(2+).

It belongs to the arenaviridae nucleocapsid protein family. Homomultimerizes to form the nucleocapsid. Binds to viral genomic RNA. Interacts with glycoprotein G2. Interacts with protein Z; this interaction probably directs the encapsidated genome to budding sites. Interacts with protein L; this interaction does not interfere with Z-L interaction. Interacts with host IKBKE (via Protein kinase domain); the interaction inhibits IKBKE kinase activity.

Its subcellular location is the virion. It is found in the host cytoplasm. In terms of biological role, encapsidates the genome, protecting it from nucleases. The encapsidated genomic RNA is termed the nucleocapsid (NC). Serves as template for viral transcription and replication. The increased presence of protein N in host cell does not seem to trigger the switch from transcription to replication as observed in other negative strain RNA viruses. Through the interaction with host IKBKE, strongly inhibits the phosphorylation and nuclear translocation of host IRF3, a protein involved in interferon activation pathway, leading to the inhibition of interferon-beta and IRF3-dependent promoters activation. Also encodes a functional 3'-5' exoribonuclease that degrades preferentially dsRNA substrates and thereby participates in the suppression of interferon induction. This Mopeia virus (MOPV) protein is Nucleoprotein.